The primary structure comprises 282 residues: Uracil-DNA glycosylase (282 aa).

The segment at 15 to 40 (SAASKRKSASNTENIPEKVPAGNENQ) is disordered. The Proton acceptor role is filled by D123.

This sequence belongs to the uracil-DNA glycosylase (UDG) superfamily. UNG family.

It localises to the mitochondrion. The protein localises to the nucleus. It carries out the reaction Hydrolyzes single-stranded DNA or mismatched double-stranded DNA and polynucleotides, releasing free uracil.. Its activity is regulated as follows. Inhibited by UGI, a B.subtilis bacteriophage PBS2 peptide inhibitor. Excises uracil residues from the DNA which can arise as a result of misincorporation of dUMP residues by DNA polymerase or due to deamination of cytosine. The polypeptide is Uracil-DNA glycosylase (Caenorhabditis elegans).